The chain runs to 598 residues: Thiol:disulfide interchange protein DsbD (598 aa).

The signal sequence occupies residues 1 to 21; it reads MRALLTFFVAGLLVLSSPAMA. An intrachain disulfide couples Cys-130 to Cys-136. Positions 158-180 are disordered; the sequence is TMPTQTASPLDTSTANTSTPQPL. The span at 159-180 shows a compositional bias: polar residues; that stretch reads MPTQTASPLDTSTANTSTPQPL. Helical transmembrane passes span 198–220, 240–262, 274–296, 324–346, 353–375, 385–407, 414–431, and 446–468; these read LLFL…YPIL, LVYV…SAGL, LIGL…TLQL, AISG…LYVA, TGGV…VAVF, GWMD…FLLE, WSTA…GWLY, and AVGI…YWFA. Residues Cys-212 and Cys-333 are joined by a disulfide bond. In terms of domain architecture, Thioredoxin spans 456–598; it reads FASAQPALNY…FLEHIQRISN (143 aa). Cys-513 and Cys-516 are disulfide-bonded.

The protein belongs to the thioredoxin family. DsbD subfamily.

The protein localises to the cell inner membrane. It catalyses the reaction [protein]-dithiol + NAD(+) = [protein]-disulfide + NADH + H(+). The catalysed reaction is [protein]-dithiol + NADP(+) = [protein]-disulfide + NADPH + H(+). Functionally, required to facilitate the formation of correct disulfide bonds in some periplasmic proteins and for the assembly of the periplasmic c-type cytochromes. Acts by transferring electrons from cytoplasmic thioredoxin to the periplasm. This transfer involves a cascade of disulfide bond formation and reduction steps. The protein is Thiol:disulfide interchange protein DsbD of Vibrio vulnificus (strain YJ016).